The chain runs to 423 residues: Adenylosuccinate synthetase (423 aa).

Residues 11–17 (GDEGKGK) and 39–41 (GHT) each bind GTP. The Proton acceptor role is filled by Asp12. Mg(2+) is bound by residues Asp12 and Gly39. IMP is bound by residues 12–15 (DEGK), 37–40 (NAGH), Thr127, Arg141, Gln223, Thr238, and Arg302. His40 serves as the catalytic Proton donor. Substrate is bound at residue 298 to 304 (TTTGRSR). GTP is bound by residues Arg304, 330–332 (KLD), and 412–414 (SVG).

This sequence belongs to the adenylosuccinate synthetase family. In terms of assembly, homodimer. It depends on Mg(2+) as a cofactor.

Its subcellular location is the cytoplasm. The enzyme catalyses IMP + L-aspartate + GTP = N(6)-(1,2-dicarboxyethyl)-AMP + GDP + phosphate + 2 H(+). Its pathway is purine metabolism; AMP biosynthesis via de novo pathway; AMP from IMP: step 1/2. Its function is as follows. Plays an important role in the de novo pathway of purine nucleotide biosynthesis. Catalyzes the first committed step in the biosynthesis of AMP from IMP. The chain is Adenylosuccinate synthetase from Methanococcoides burtonii (strain DSM 6242 / NBRC 107633 / OCM 468 / ACE-M).